We begin with the raw amino-acid sequence, 897 residues long: Leucine--tRNA ligase (897 aa).

Positions 42–52 match the 'HIGH' region motif; it reads PYPSGKLHMGH. The 'KMSKS' region motif lies at 645-649; that stretch reads TMSKS. Lysine 648 lines the ATP pocket.

Belongs to the class-I aminoacyl-tRNA synthetase family.

Its subcellular location is the cytoplasm. It carries out the reaction tRNA(Leu) + L-leucine + ATP = L-leucyl-tRNA(Leu) + AMP + diphosphate. The sequence is that of Leucine--tRNA ligase from Paracidovorax citrulli (strain AAC00-1) (Acidovorax citrulli).